The primary structure comprises 451 residues: UPF0210 protein LMHCC_2097 (451 aa).

The protein belongs to the UPF0210 family. In terms of assembly, homodimer.

In Listeria monocytogenes serotype 4a (strain HCC23), this protein is UPF0210 protein LMHCC_2097.